The primary structure comprises 764 residues: PFL-like enzyme TdcE (764 aa).

The region spanning 7–629 (TSDKLYADAW…KTGNTPDGRR (623 aa)) is the PFL domain. The active-site S-acetylcysteine intermediate is Cys-423. Cys-424 acts as the Cysteine radical intermediate in catalysis. The interval 622–645 (GNTPDGRRAGTPFAPGANPMHGRD) is disordered. A Glycine radical domain is found at 636–764 (PGANPMHGRD…VISRTFTQAL (129 aa)). Gly-739 carries the post-translational modification Glycine radical.

Belongs to the glycyl radical enzyme (GRE) family. PFL subfamily.

It localises to the cytoplasm. The enzyme catalyses 2-oxobutanoate + CoA = propanoyl-CoA + formate. The catalysed reaction is formate + acetyl-CoA = pyruvate + CoA. It functions in the pathway amino-acid degradation; L-threonine degradation via propanoate pathway; propanoate from L-threonine: step 2/4. Dependent on PFL-activase. In terms of biological role, catalyzes the cleavage of 2-ketobutyrate to propionyl-CoA and formate. It can also use pyruvate as substrate. The protein is PFL-like enzyme TdcE (tdcE) of Escherichia coli (strain K12).